The sequence spans 367 residues: UDP-N-acetylglucosamine--N-acetylmuramyl-(pentapeptide) pyrophosphoryl-undecaprenol N-acetylglucosamine transferase (367 aa).

Residues 15-17 (TGG), N127, R163, S191, I249, and Q294 each bind UDP-N-acetyl-alpha-D-glucosamine.

It belongs to the glycosyltransferase 28 family. MurG subfamily.

The protein resides in the cell inner membrane. It catalyses the reaction di-trans,octa-cis-undecaprenyl diphospho-N-acetyl-alpha-D-muramoyl-L-alanyl-D-glutamyl-meso-2,6-diaminopimeloyl-D-alanyl-D-alanine + UDP-N-acetyl-alpha-D-glucosamine = di-trans,octa-cis-undecaprenyl diphospho-[N-acetyl-alpha-D-glucosaminyl-(1-&gt;4)]-N-acetyl-alpha-D-muramoyl-L-alanyl-D-glutamyl-meso-2,6-diaminopimeloyl-D-alanyl-D-alanine + UDP + H(+). The protein operates within cell wall biogenesis; peptidoglycan biosynthesis. Its function is as follows. Cell wall formation. Catalyzes the transfer of a GlcNAc subunit on undecaprenyl-pyrophosphoryl-MurNAc-pentapeptide (lipid intermediate I) to form undecaprenyl-pyrophosphoryl-MurNAc-(pentapeptide)GlcNAc (lipid intermediate II). This chain is UDP-N-acetylglucosamine--N-acetylmuramyl-(pentapeptide) pyrophosphoryl-undecaprenol N-acetylglucosamine transferase, found in Burkholderia pseudomallei (strain 1710b).